Consider the following 313-residue polypeptide: Acetyl-coenzyme A carboxylase carboxyl transferase subunit beta (313 aa).

One can recognise a CoA carboxyltransferase N-terminal domain in the interval 24-293; the sequence is LWIKCPDSGQ…LETASKSVQP (270 aa).

This sequence belongs to the AccD/PCCB family. As to quaternary structure, acetyl-CoA carboxylase is a heterohexamer composed of biotin carboxyl carrier protein (AccB), biotin carboxylase (AccC) and two subunits each of ACCase subunit alpha (AccA) and ACCase subunit beta (AccD).

The protein resides in the cytoplasm. It carries out the reaction N(6)-carboxybiotinyl-L-lysyl-[protein] + acetyl-CoA = N(6)-biotinyl-L-lysyl-[protein] + malonyl-CoA. The protein operates within lipid metabolism; malonyl-CoA biosynthesis; malonyl-CoA from acetyl-CoA: step 1/1. Functionally, component of the acetyl coenzyme A carboxylase (ACC) complex. Biotin carboxylase (BC) catalyzes the carboxylation of biotin on its carrier protein (BCCP) and then the CO(2) group is transferred by the transcarboxylase to acetyl-CoA to form malonyl-CoA. The sequence is that of Acetyl-coenzyme A carboxylase carboxyl transferase subunit beta from Bradyrhizobium diazoefficiens (strain JCM 10833 / BCRC 13528 / IAM 13628 / NBRC 14792 / USDA 110).